The sequence spans 233 residues: MKLSVGIFFGGLFAALGVLLFLVAFGTDYWLLATEIGRCSKAPEDAGTEKATFHHEGFFWRCWFSGNVREHNTSMWKFWYTNQSPSKNCTHAYLSPFPHIRDEHNSTSYDSAVIYRGFWTVLMLLGVITIVMASFLIICAAPFASHILYKAGGGFYILAGVLFSLVVVMYVIWVQAMADLENYTNMKKMDCPDFAVYVRYGWSFMLAPIGVFFALLAGMLFLLVGRAIYLNSD.

The N-terminal stretch at Met-1–Gly-26 is a signal peptide. At Thr-27–Gly-117 the chain is on the extracellular side. The tract at residues Thr-52–Cys-62 is interaction with ITGB1. Residues Asn-88 and Asn-105 are each glycosylated (N-linked (GlcNAc...) asparagine). The chain crosses the membrane as a helical span at residues Phe-118–Ile-138. The Cytoplasmic portion of the chain corresponds to Cys-139 to Gly-153. Residues Gly-154–Val-174 traverse the membrane as a helical segment. Over Gln-175–Ser-203 the chain is Extracellular. Residues Phe-204 to Val-224 traverse the membrane as a helical segment. The Cytoplasmic portion of the chain corresponds to Gly-225–Asp-233.

This sequence belongs to the TMEM182 family. As to quaternary structure, interacts with ITGB1. As to expression, expressed in skeletal muscle and adipose tissue.

It localises to the cell membrane. Its function is as follows. Negatively regulates myogenesis and skeletal muscle regeneration via its association with ITGB1. Modulates ITGB1 activation by decreasing ITGB1-LAMB1 interaction and inhibiting ITGB1-mediated intracellular signaling during myogenesis. The sequence is that of Transmembrane protein 182 (TMEM182) from Gallus gallus (Chicken).